Here is a 72-residue protein sequence, read N- to C-terminus: Toxin Acra II-2 (72 aa).

The LCN-type CS-alpha/beta domain occupies 3-67; that stretch reads VPGNYPLNTN…VWNAAKNYCK (65 aa). Disulfide bonds link Cys-18–Cys-41, Cys-27–Cys-46, and Cys-31–Cys-48.

This sequence belongs to the long (3 C-C) scorpion toxin superfamily. Sodium channel inhibitor family. Beta subfamily. In terms of tissue distribution, expressed by the venom gland.

It is found in the secreted. Its function is as follows. Binds to sodium channels (Nav) and affects the channel activation process. In Androctonus crassicauda (Arabian fat-tailed scorpion), this protein is Toxin Acra II-2.